The chain runs to 466 residues: Asparagine--tRNA ligase (466 aa).

This sequence belongs to the class-II aminoacyl-tRNA synthetase family. Homodimer.

The protein localises to the cytoplasm. It catalyses the reaction tRNA(Asn) + L-asparagine + ATP = L-asparaginyl-tRNA(Asn) + AMP + diphosphate + H(+). The polypeptide is Asparagine--tRNA ligase (Buchnera aphidicola subsp. Baizongia pistaciae (strain Bp)).